A 175-amino-acid chain; its full sequence is Bcl-2-related protein A1 (175 aa).

It belongs to the Bcl-2 family. As to quaternary structure, interacts directly with BCL2L11/BIM, BAK1, BID, BMF and BBC3. Interacts directly with PMAIP1. Interacts with BOP. Interacts with ING4. Interacts with UBQLN4.

The protein localises to the cytoplasm. Functionally, retards apoptosis induced by IL-3 deprivation. May function in the response of hemopoietic cells to external signals and in maintaining endothelial survival during infection. Can inhibit apoptosis induced by serum starvation in the mammary epithelial cell line HC11. This Bos taurus (Bovine) protein is Bcl-2-related protein A1 (BCL2A1).